We begin with the raw amino-acid sequence, 391 residues long: Phosphoglycerate kinase (391 aa).

Substrate-binding positions include 21 to 23, Arg-36, 59 to 62, Arg-113, and Arg-146; these read DFN and HLGR. ATP is bound by residues Lys-197, Glu-319, and 345-348; that span reads GGDT.

Belongs to the phosphoglycerate kinase family. As to quaternary structure, monomer.

Its subcellular location is the cytoplasm. It carries out the reaction (2R)-3-phosphoglycerate + ATP = (2R)-3-phospho-glyceroyl phosphate + ADP. It functions in the pathway carbohydrate degradation; glycolysis; pyruvate from D-glyceraldehyde 3-phosphate: step 2/5. The chain is Phosphoglycerate kinase from Methylococcus capsulatus (strain ATCC 33009 / NCIMB 11132 / Bath).